Consider the following 182-residue polypeptide: ATP synthase subunit b (182 aa).

The helical transmembrane segment at 25–45 threads the bilayer; that stretch reads VVLAGFAVLFYIVVKFVVPMF.

This sequence belongs to the ATPase B chain family. F-type ATPases have 2 components, F(1) - the catalytic core - and F(0) - the membrane proton channel. F(1) has five subunits: alpha(3), beta(3), gamma(1), delta(1), epsilon(1). F(0) has three main subunits: a(1), b(2) and c(10-14). The alpha and beta chains form an alternating ring which encloses part of the gamma chain. F(1) is attached to F(0) by a central stalk formed by the gamma and epsilon chains, while a peripheral stalk is formed by the delta and b chains.

The protein localises to the cell membrane. F(1)F(0) ATP synthase produces ATP from ADP in the presence of a proton or sodium gradient. F-type ATPases consist of two structural domains, F(1) containing the extramembraneous catalytic core and F(0) containing the membrane proton channel, linked together by a central stalk and a peripheral stalk. During catalysis, ATP synthesis in the catalytic domain of F(1) is coupled via a rotary mechanism of the central stalk subunits to proton translocation. Functionally, component of the F(0) channel, it forms part of the peripheral stalk, linking F(1) to F(0). The protein is ATP synthase subunit b of Arthrobacter sp. (strain FB24).